The chain runs to 147 residues: Transcriptional regulator MraZ (147 aa).

SpoVT-AbrB domains follow at residues 5–52 (NHPT…PMEE) and 81–124 (GQVV…NAEH).

It belongs to the MraZ family. As to quaternary structure, forms oligomers.

It is found in the cytoplasm. It localises to the nucleoid. This is Transcriptional regulator MraZ from Koribacter versatilis (strain Ellin345).